Here is a 575-residue protein sequence, read N- to C-terminus: Intermediate filament protein ifa-1 (575 aa).

Disordered regions lie at residues Met1–Val30 and Ser45–Glu72. The tract at residues Met1 to Glu72 is head. Polar residues predominate over residues Glu7–Ser17. Residues Arg63–Glu72 are compositionally biased toward basic and acidic residues. The region spanning Glu69 to Ala422 is the IF rod domain. Residues Met73–Leu104 form a coil 1A region. The interval Arg105–Met118 is linker 1. Positions Tyr119 to Leu256 are coil 1B. The interval Gln257–Asn274 is linker 12. The segment at Glu275–Ala422 is coil 2. Positions Gly423–Gln572 are tail. Residues Ser455–Gln572 form the LTD domain.

It belongs to the intermediate filament family. In terms of assembly, forms some heteromeric filaments with ifb-1. As to expression, isoform d is abundantly expressed in the marginal cells of the pharynx, forming apicobasally oriented thick filament bundles that are attached to the apical and basal plasma membrane by hemi-adherens junctions. Expression of isoform c is also seen in the excretory cells and in the uterus. Isoform c is detectable in the amphid sensory neurins and the pharyngeal-intestinal valve. Both isoform c and isoform d are expressed in the rectum and vulva and in some neurons of the tail. In larvae, expression is seen in the excretory cell, the vulva, the rectum and in the thick filament bundles of the pharynx. Expression in pharynx begins in late embryos.

The protein resides in the cytoplasm. Functionally, cytoplasmic intermediate filaments make up the structural component of the cytoskeleton providing mechanical strength to cells. Essential protein required during embryogenesis especially for survival past the L1 larva stage, involved in intestine morphogenesis. The polypeptide is Intermediate filament protein ifa-1 (ifa-1) (Caenorhabditis elegans).